The chain runs to 409 residues: MTEAYISLLIGDGYLPGALYLANRIRQFDNERDLVILVSDISIKVHRLLERFYSKVVVLLPDSKIATSPYNAPELHLLNRPDLENVLNKIHIFHQTHYEKLLYVDLDVLILNDFKGLFDIEVKEWELYAVSDIGWPDYFNSGLMLFKPSANVFRHLLALLTEVPGVSYDGGDQGLINYVFQNKWLRTGDDTKRCGVWYNLSFAFNMTLSNNYESLPSVLRNLTDIKLVHFIGIVKPWMLKPSFVNDFPDGSLDSFVAQWWEQFSSFENGEFLPLVFKNVESERIEEDSHETEEKVDEEVSISEPQDETTDFKYQFGHHSFEEPAPVLDYSTEGEAWKLNEEQLTNQWDVDAPAEPLPVPVEEDEREETKAEAELEELLPDIVQPEPPAPHVFPWEAYNEKPTRVFHDYR.

L8, Y14, and R80 together coordinate UDP. Positions 8, 14, 80, 89, 105, 107, 140, 141, 169, 172, and 173 each coordinate UDP-alpha-D-glucose. UDP is bound by residues D105 and D107. Positions 105 and 107 each coordinate Mn(2+). Y212 carries O-linked (Glc...) tyrosine glycosylation. Positions 229, 232, and 235 each coordinate UDP. H229 contributes to the Mn(2+) binding site. G232 and K235 together coordinate UDP-alpha-D-glucose. The tract at residues 283–303 (RIEEDSHETEEKVDEEVSISE) is disordered.

The protein belongs to the glycosyltransferase 8 family. Glycogenin subfamily. Mn(2+) serves as cofactor.

It is found in the cytoplasm. It localises to the vacuole. The enzyme catalyses L-tyrosyl-[glycogenin] + UDP-alpha-D-glucose = alpha-D-glucosyl-L-tyrosyl-[glycogenin] + UDP + H(+). The catalysed reaction is [1,4-alpha-D-glucosyl](n)-L-tyrosyl-[glycogenin] + UDP-alpha-D-glucose = [1,4-alpha-D-glucosyl](n+1)-L-tyrosyl-[glycogenin] + UDP + H(+). Functionally, glycogenin participates in the glycogen biosynthetic process along with glycogen synthase and glycogen branching enzyme. It catalyzes the formation of a short alpha (1,4)-glucosyl chain covalently attached via a glucose 1-O-tyrosyl linkage to internal tyrosine residues and these chains act as primers for the elongation reaction catalyzed by glycogen synthase. This Komagataella phaffii (strain GS115 / ATCC 20864) (Yeast) protein is Glycogenin.